The sequence spans 260 residues: NAD kinase (260 aa).

Asp54 (proton acceptor) is an active-site residue. Residues 54–55, 123–124, Arg150, Asp152, and 163–168 each bind NAD(+); these read DG, ND, and TAYSLS.

The protein belongs to the NAD kinase family. Requires a divalent metal cation as cofactor.

Its subcellular location is the cytoplasm. It carries out the reaction NAD(+) + ATP = ADP + NADP(+) + H(+). In terms of biological role, involved in the regulation of the intracellular balance of NAD and NADP, and is a key enzyme in the biosynthesis of NADP. Catalyzes specifically the phosphorylation on 2'-hydroxyl of the adenosine moiety of NAD to yield NADP. This chain is NAD kinase, found in Caldicellulosiruptor saccharolyticus (strain ATCC 43494 / DSM 8903 / Tp8T 6331).